A 540-amino-acid chain; its full sequence is Light-independent protochlorophyllide reductase subunit B (540 aa).

[4Fe-4S] cluster is bound at residue Asp-36. The Proton donor role is filled by Asp-292. 428 to 429 (GL) provides a ligand contact to substrate. The segment at 451-490 (SNVASGVEPSTPSVSSEVSASSSASPEASAPTPSPDGDMV) is disordered. The segment covering 457 to 481 (VEPSTPSVSSEVSASSSASPEASAP) has biased composition (low complexity).

It belongs to the ChlB/BchB/BchZ family. In terms of assembly, protochlorophyllide reductase is composed of three subunits; BchL, BchN and BchB. Forms a heterotetramer of two BchB and two BchN subunits. [4Fe-4S] cluster is required as a cofactor.

The enzyme catalyses chlorophyllide a + oxidized 2[4Fe-4S]-[ferredoxin] + 2 ADP + 2 phosphate = protochlorophyllide a + reduced 2[4Fe-4S]-[ferredoxin] + 2 ATP + 2 H2O. It functions in the pathway porphyrin-containing compound metabolism; bacteriochlorophyll biosynthesis (light-independent). Functionally, component of the dark-operative protochlorophyllide reductase (DPOR) that uses Mg-ATP and reduced ferredoxin to reduce ring D of protochlorophyllide (Pchlide) to form chlorophyllide a (Chlide). This reaction is light-independent. The NB-protein (BchN-BchB) is the catalytic component of the complex. This chain is Light-independent protochlorophyllide reductase subunit B, found in Chlorobium chlorochromatii (strain CaD3).